Here is a 238-residue protein sequence, read N- to C-terminus: tRNA1(Val) (adenine(37)-N6)-methyltransferase (238 aa).

Belongs to the methyltransferase superfamily. tRNA (adenine-N(6)-)-methyltransferase family.

The protein resides in the cytoplasm. The enzyme catalyses adenosine(37) in tRNA1(Val) + S-adenosyl-L-methionine = N(6)-methyladenosine(37) in tRNA1(Val) + S-adenosyl-L-homocysteine + H(+). Functionally, specifically methylates the adenine in position 37 of tRNA(1)(Val) (anticodon cmo5UAC). The polypeptide is tRNA1(Val) (adenine(37)-N6)-methyltransferase (Shewanella baltica (strain OS223)).